Here is a 67-residue protein sequence, read N- to C-terminus: Sodium channel neurotoxin MeuNaTxalpha-10 (67 aa).

Residues 2–66 (RDGYIAKPHN…VPIRIPGKCH (65 aa)) enclose the LCN-type CS-alpha/beta domain. 4 disulfide bridges follow: Cys12–Cys65, Cys16–Cys38, Cys24–Cys48, and Cys28–Cys50. Arg67 is a propeptide (removed by a carboxypeptidase).

It belongs to the long (4 C-C) scorpion toxin superfamily. Sodium channel inhibitor family. Alpha subfamily. Expressed by the venom gland.

The protein localises to the secreted. Functionally, alpha toxins bind voltage-independently at site-3 of sodium channels (Nav) and inhibit the inactivation of the activated channels, thereby blocking neuronal transmission. In Mesobuthus eupeus (Lesser Asian scorpion), this protein is Sodium channel neurotoxin MeuNaTxalpha-10.